Here is a 221-residue protein sequence, read N- to C-terminus: uncharacterized protein (221 aa).

The segment at 40–162 (TIEVEPSPVQ…EPPEKVELSP (123 aa)) is disordered. Residues 47–60 (PVQQDNPPISSEQA) are compositionally biased toward polar residues. Over residues 82 to 92 (SSAQQEATAQT) the composition is skewed to low complexity.

This is an uncharacterized protein from Homo sapiens (Human).